Here is a 574-residue protein sequence, read N- to C-terminus: MTILLQRAKFKKRLMPILFPLMLAGCTNLFGSNFQDVLRNDANASSEFYMNKIEQTREVEDQQTYKLLAARVLVTENKTAQAEALLAELTKLTPEQQLDKSILDALIAAVKRDNDSASALLKTIPLAQLSQSQTSRYYEVQARIAENKTDIIEAVKARIQMDMALTDVQRKQDNIDKIWALLRSGNKTLINTTQPEGNVALAGWLDLTKAYNDNLSQPSQLAQALQNWKTTYPNHSAAYLFPTELKSLSNFTQTQVNKIALLLPLSGNASILGSTIKSGFDDSRGADKSVQVDVIDTMAMPVTDAIALAKQNGDGMIVGPLLKDNVDVILSNPTAVQGMNVLALNSTPNARAIDKMCYYGLAPEDEAEAAANRMWNDGVRQPIVAVPQSDLGQRTASAFNVRWQQLAASDADVRYYNQPDDAAYNLTADPAQNQAIYIVVTDSEQLMSIKGALDNSGVKAKIYTNSRNNSSNNAVEYRLAMEGVTFSDIPFFKDLDGEQYKKIEAATGGDYSLMRLYAMGADSWLLAHSFNELRQVPGFSLSGLTGKLTAGPNCNVERDLTWYSYQGGNIVPLN.

The signal sequence occupies residues 1–25; that stretch reads MTILLQRAKFKKRLMPILFPLMLAG. Residue Cys-26 is the site of N-palmitoyl cysteine attachment. Cys-26 is lipidated: S-diacylglycerol cysteine.

It belongs to the LpoA family. As to quaternary structure, interacts with PBP1a.

It is found in the cell outer membrane. Regulator of peptidoglycan synthesis that is essential for the function of penicillin-binding protein 1A (PBP1a). The chain is Penicillin-binding protein activator LpoA from Mannheimia succiniciproducens (strain KCTC 0769BP / MBEL55E).